The sequence spans 216 residues: Pentapeptide repeat protein VPA0095 (216 aa).

The protein belongs to the pentapeptide repeat protein family.

Has no effect when overexpressed in E.coli. When Cys-115 is mutated to Tyr and overexpressed it increases (fluoro)quinolone resistance in E.coli up to 16-fold for ciprofloxacin, levofloxacin and nalidixic acid. The polypeptide is Pentapeptide repeat protein VPA0095 (Vibrio parahaemolyticus serotype O3:K6 (strain RIMD 2210633)).